The sequence spans 95 residues: Large ribosomal subunit protein bL25 (95 aa).

It belongs to the bacterial ribosomal protein bL25 family. As to quaternary structure, part of the 50S ribosomal subunit; part of the 5S rRNA/L5/L18/L25 subcomplex. Contacts the 5S rRNA. Binds to the 5S rRNA independently of L5 and L18.

In terms of biological role, this is one of the proteins that binds to the 5S RNA in the ribosome where it forms part of the central protuberance. The protein is Large ribosomal subunit protein bL25 of Shewanella sp. (strain ANA-3).